Reading from the N-terminus, the 490-residue chain is Aspartyl/glutamyl-tRNA(Asn/Gln) amidotransferase subunit B (490 aa).

The protein belongs to the GatB/GatE family. GatB subfamily. Heterotrimer of A, B and C subunits.

The catalysed reaction is L-glutamyl-tRNA(Gln) + L-glutamine + ATP + H2O = L-glutaminyl-tRNA(Gln) + L-glutamate + ADP + phosphate + H(+). It carries out the reaction L-aspartyl-tRNA(Asn) + L-glutamine + ATP + H2O = L-asparaginyl-tRNA(Asn) + L-glutamate + ADP + phosphate + 2 H(+). Its function is as follows. Allows the formation of correctly charged Asn-tRNA(Asn) or Gln-tRNA(Gln) through the transamidation of misacylated Asp-tRNA(Asn) or Glu-tRNA(Gln) in organisms which lack either or both of asparaginyl-tRNA or glutaminyl-tRNA synthetases. The reaction takes place in the presence of glutamine and ATP through an activated phospho-Asp-tRNA(Asn) or phospho-Glu-tRNA(Gln). This chain is Aspartyl/glutamyl-tRNA(Asn/Gln) amidotransferase subunit B, found in Methylobacterium radiotolerans (strain ATCC 27329 / DSM 1819 / JCM 2831 / NBRC 15690 / NCIMB 10815 / 0-1).